The following is a 392-amino-acid chain: Protein SRL2 (392 aa).

At Ser-11 the chain carries Phosphoserine. The interval 18-52 is disordered; it reads KPSETPKMEEEKLEVTNVNASSSKKVHKSKKSTSK. Residues 21–31 show a composition bias toward basic and acidic residues; it reads ETPKMEEEKLE. Positions 41 to 50 are enriched in basic residues; sequence KKVHKSKKST. Ser-139 is subject to Phosphoserine. Positions 284-303 are disordered; sequence EDSTAVTNENGHISSEKNLK. The span at 287 to 296 shows a compositional bias: polar residues; that stretch reads TAVTNENGHI.

The protein localises to the cytoplasm. It localises to the nucleus. This Saccharomyces cerevisiae (strain ATCC 204508 / S288c) (Baker's yeast) protein is Protein SRL2 (SRL2).